The following is a 299-amino-acid chain: ATP phosphoribosyltransferase (299 aa).

This sequence belongs to the ATP phosphoribosyltransferase family. Long subfamily. As to quaternary structure, equilibrium between an active dimeric form, an inactive hexameric form and higher aggregates. Interconversion between the various forms is largely reversible and is influenced by the natural substrates and inhibitors of the enzyme. Mg(2+) serves as cofactor.

The protein resides in the cytoplasm. The catalysed reaction is 1-(5-phospho-beta-D-ribosyl)-ATP + diphosphate = 5-phospho-alpha-D-ribose 1-diphosphate + ATP. The protein operates within amino-acid biosynthesis; L-histidine biosynthesis; L-histidine from 5-phospho-alpha-D-ribose 1-diphosphate: step 1/9. With respect to regulation, feedback inhibited by histidine. Its function is as follows. Catalyzes the condensation of ATP and 5-phosphoribose 1-diphosphate to form N'-(5'-phosphoribosyl)-ATP (PR-ATP). Has a crucial role in the pathway because the rate of histidine biosynthesis seems to be controlled primarily by regulation of HisG enzymatic activity. The chain is ATP phosphoribosyltransferase from Salmonella choleraesuis (strain SC-B67).